A 65-amino-acid chain; its full sequence is Large ribosomal subunit protein bL35 (65 aa).

Over residues 1–16 (MPKQKTHRASAKRFKR) the composition is skewed to basic residues. The segment at 1–20 (MPKQKTHRASAKRFKRTGSG) is disordered.

Belongs to the bacterial ribosomal protein bL35 family.

This is Large ribosomal subunit protein bL35 from Streptococcus equi subsp. equi (strain 4047).